We begin with the raw amino-acid sequence, 717 residues long: Protein Teyrha-meyrha (717 aa).

Positions phenylalanine 140–histidine 152 are enriched in polar residues. 6 disordered regions span residues phenylalanine 140 to alanine 214, histidine 229 to valine 270, lysine 440 to lysine 498, serine 511 to proline 539, aspartate 563 to alanine 594, and glutamine 624 to alanine 717. Residues alanine 195–alanine 214 are compositionally biased toward low complexity. Positions proline 235–histidine 263 are enriched in basic residues. Positions proline 442–glutamate 451 are enriched in basic and acidic residues. Acidic residues predominate over residues glutamate 452–proline 466. Over residues glutamate 471–threonine 482 the composition is skewed to polar residues. Over residues lysine 513–valine 522 the composition is skewed to basic and acidic residues. Low complexity-rich tracts occupy residues serine 523–serine 533 and asparagine 570–asparagine 580. Over residues glutamine 630–asparagine 640 the composition is skewed to polar residues. Residues asparagine 667–asparagine 686 are compositionally biased toward low complexity. A compositionally biased stretch (polar residues) spans proline 687–serine 704.

In embryos, expressed specifically in M12 (at protein level).

It is found in the nucleus. Functionally, required for the correct synaptic targeting of motoneurons RP5 and V to muscle 12 (M12). May be involved in the negative regulation of Tl in M12. Involved in the correct patterning of veins in the proximal (costal) region of the wing blade. This Drosophila melanogaster (Fruit fly) protein is Protein Teyrha-meyrha.